The chain runs to 435 residues: Methylenetetrahydrofolate--tRNA-(uracil-5-)-methyltransferase TrmFO (435 aa).

Residue 9–14 (GAGLAG) coordinates FAD.

It belongs to the MnmG family. TrmFO subfamily. FAD is required as a cofactor.

The protein resides in the cytoplasm. The catalysed reaction is uridine(54) in tRNA + (6R)-5,10-methylene-5,6,7,8-tetrahydrofolate + NADH + H(+) = 5-methyluridine(54) in tRNA + (6S)-5,6,7,8-tetrahydrofolate + NAD(+). It catalyses the reaction uridine(54) in tRNA + (6R)-5,10-methylene-5,6,7,8-tetrahydrofolate + NADPH + H(+) = 5-methyluridine(54) in tRNA + (6S)-5,6,7,8-tetrahydrofolate + NADP(+). Functionally, catalyzes the folate-dependent formation of 5-methyl-uridine at position 54 (M-5-U54) in all tRNAs. The protein is Methylenetetrahydrofolate--tRNA-(uracil-5-)-methyltransferase TrmFO of Enterococcus faecalis (strain ATCC 700802 / V583).